Here is a 315-residue protein sequence, read N- to C-terminus: MAEKVAVIVGPTAVGKTKLGIALAKKLGGEVISGDSMQIYKGMDIGTAKVKPDEMEGIPHHLLDIKEPCEPFSVVEFQRLCRALITEISARGRLPIIVGGTGLYIQAALYDYQFSAAPSDEAYRRALKQLAAEQGAEALHRRLEAVDPISAARIHPHNIRRVIRALEVYHCTGKPFSEWQQGQSKRLLYEAAIVGLTAEREALYRRINERVDEMIAAGLIEEARALYDRGLRDCQAVQAIGYKELYDYFDGRVSLDEAIEQLKQNSRRYAKRQLTWFRNQMPVKWFDMTDAGQFAAKVEEISRYVAGKLQLEANI.

10–17 (GPTAVGKT) is a binding site for ATP. Position 12–17 (12–17 (TAVGKT)) interacts with substrate. The segment at 35–38 (DSMQ) is interaction with substrate tRNA.

This sequence belongs to the IPP transferase family. In terms of assembly, monomer. Mg(2+) serves as cofactor.

It carries out the reaction adenosine(37) in tRNA + dimethylallyl diphosphate = N(6)-dimethylallyladenosine(37) in tRNA + diphosphate. Its function is as follows. Catalyzes the transfer of a dimethylallyl group onto the adenine at position 37 in tRNAs that read codons beginning with uridine, leading to the formation of N6-(dimethylallyl)adenosine (i(6)A). The protein is tRNA dimethylallyltransferase of Geobacillus kaustophilus (strain HTA426).